Reading from the N-terminus, the 992-residue chain is Disks large-associated protein 1 (992 aa).

Disordered regions lie at residues 150-209 (TKSH…SWWS) and 355-376 (KAMG…PKVA). Ser169 bears the Phosphoserine mark. Positions 194 to 209 (RSNASNASPTSPSWWS) are enriched in low complexity. Phosphoserine is present on residues Ser362, Ser365, Ser368, Ser372, Ser389, Ser418, Ser421, Ser425, Ser428, Ser437, Ser509, Ser516, and Ser578. Thr579 carries the post-translational modification Phosphothreonine. Residues Ser581 and Ser605 each carry the phosphoserine modification. Thr606 is modified (phosphothreonine). Phosphoserine is present on residues Ser608 and Ser611. Interaction with DYL2 regions lie at residues 665–676 (LSIGIQVDDAEE) and 687–698 (NKFQSVGVQVEE). Positions 914 to 980 (WKQMDPLDKK…QNSATESAES (67 aa)) are disordered. Basic and acidic residues-rich tracts occupy residues 918–927 (DPLDKKERRA) and 943–958 (IRER…EARK). Ser947 is modified (phosphoserine). A compositionally biased stretch (polar residues) spans 969-978 (VRQNSATESA). Residues 990–992 (TRL) carry the PDZ-binding motif.

It belongs to the SAPAP family. As to quaternary structure, interacts with the guanylate kinase-like domain of DLG1, DLG2, DLG3, DLG4 and AIP1. Interacts with the PDZ domain of SHANK1, SHANK2 and SHANK3. Found in a complex with DLG4 and SHANK1, SHANK2 or SHANK3. Found in a complex with DLG4 and BEGAIN. Interacts with DYL2 and LRFN1. Interacts with MPP2 (via the SH3-Guanylate kinase-like sub-module). Post-translationally, ubiquitinated by TRIM3; leading to proteasomal degradation. As to expression, highest levels in the neocortex, part of the hippocampus, the granule cell layer of the cerebellum, the glomerular layer of the olfactory bulb, the inner plexiform layer of the retina, the ventral and dorsal horn of the spinal cord, the neuromuscular junction and the submandibular ganglion.

It localises to the cell membrane. Its subcellular location is the postsynaptic density. The protein resides in the synapse. Functionally, part of the postsynaptic scaffold in neuronal cells. This chain is Disks large-associated protein 1 (Dlgap1), found in Mus musculus (Mouse).